Here is a 105-residue protein sequence, read N- to C-terminus: Large ribosomal subunit protein eL30 (105 aa).

Belongs to the eukaryotic ribosomal protein eL30 family.

The protein is Large ribosomal subunit protein eL30 (RPL30) of Trypanosoma brucei brucei.